We begin with the raw amino-acid sequence, 1259 residues long: Zinc finger protein BRUTUS-like At1g74770 (1259 aa).

A helical transmembrane segment spans residues 441–461; the sequence is LLYTSIHVLPLGLLKCVILWF. 2 stretches are compositionally biased toward basic and acidic residues: residues 904–916 and 924–934; these read KEEK…ESKK and EGDKEQTDKMS. A disordered region spans residues 904–938; it reads KEEKDLERSESKKICRGSNQEGDKEQTDKMSQKVS. The CHY-type zinc finger occupies 1018 to 1087; sequence PHSLIFGCNH…ANCSNTSCKS (70 aa). Residues Cys1025, His1027, Cys1038, Cys1039, Cys1045, Cys1048, His1049, His1055, Cys1067, Cys1070, Cys1080, Cys1085, Cys1094, Cys1097, His1108, Cys1109, Cys1112, Cys1115, His1127, Cys1128, Cys1131, Cys1134, His1142, and Cys1144 each contribute to the Zn(2+) site. The segment at 1089-1152 adopts a CTCHY-type zinc-finger fold; it reads MGKYFCKICK…VCREKCLEDN (64 aa). The RING-type; atypical zinc finger occupies 1153–1195; that stretch reads CPICHEYIFTSSSPVKALPCGHLMHSTCFQEYTCSHYTCPVCS.

As to quaternary structure, binds zinc and iron ions.

Its subcellular location is the membrane. The protein localises to the nucleus. It functions in the pathway protein modification; protein ubiquitination. Functionally, probable E3 ubiquitin-protein ligase that may regulate the response to iron deficiency and thus contributes to iron homeostasis. This is Zinc finger protein BRUTUS-like At1g74770 from Arabidopsis thaliana (Mouse-ear cress).